Reading from the N-terminus, the 158-residue chain is Regenerating islet-derived protein 4 (158 aa).

The first 22 residues, 1–22 (MASRSMRLLLLLSCLAKTGVLG), serve as a signal peptide directing secretion. Cysteines 30 and 41 form a disulfide. The C-type lectin domain maps to 37–155 (HKSNCYGYFR…CNKRQHFLCK (119 aa)). The N-linked (GlcNAc...) asparagine glycan is linked to N50. 2 cysteine pairs are disulfide-bonded: C58–C154 and C129–C146. Residues 98 to 103 (DPQKRQ) and 135 to 137 (NNN) each bind a carbohydrate.

Highly expressed in the gastrointestinal tract including the duodenum, jejunum, ileum, ileocecum, appendix, descending colon, pancreas and small intestine. Weakly expressed in normal colon and stomach. Strongly expressed in most colorectal tumors than in normal colon. Preferentially expressed in mucinous tumors and in some cases neuro-endocrine tumors. Expressed in mucus-secreting cells and enterocyte-like cells. In small intestine expressed at the basal perinuclear zone of goblet cells.

The protein resides in the secreted. Its function is as follows. Calcium-independent lectin displaying mannose-binding specificity and able to maintain carbohydrate recognition activity in an acidic environment. May be involved in inflammatory and metaplastic responses of the gastrointestinal epithelium. The chain is Regenerating islet-derived protein 4 (REG4) from Homo sapiens (Human).